Consider the following 399-residue polypeptide: Developmentally-regulated G-protein 1 (399 aa).

Positions 63 to 288 (GRVALIGFPS…LLARMWDEMG (226 aa)) constitute an OBG-type G domain. GTP contacts are provided by residues 69-76 (GFPSVGKS), 115-119 (DLPGI), and 246-249 (NKID). The region spanning 288–366 (GLVRVYSKPQ…EDEDVVQIVK (79 aa)) is the TGS domain. Positions 367-399 (KKERDEGGRGRFKSHSNAPARIADREKKAPLKQ) are disordered. Residues 388–399 (IADREKKAPLKQ) are compositionally biased toward basic and acidic residues.

This sequence belongs to the TRAFAC class OBG-HflX-like GTPase superfamily. OBG GTPase family. Expressed in actively growing tissues and reproductive organs. Mostly expressed in leaves, stems and siliques. Also present in flowers and flower buds, and, to a lower extent, in roots.

The protein localises to the cytoplasmic vesicle. The protein resides in the cytoplasm. Binds GDP and GTP, and has low GTPase activity. May interact with phosphatidic acid (PA). This is Developmentally-regulated G-protein 1 (DRG1) from Arabidopsis thaliana (Mouse-ear cress).